Reading from the N-terminus, the 234-residue chain is Putative methyltransferase-like protein 15P1 (234 aa).

S-adenosyl-L-methionine-binding positions include Gly100–His102, Asp119, Phe146, Asp169, and Gln176.

The protein belongs to the methyltransferase superfamily. RsmH family.

In terms of biological role, probable S-adenosyl-L-methionine-dependent methyltransferase. In Homo sapiens (Human), this protein is Putative methyltransferase-like protein 15P1 (METTL15P1).